Here is a 339-residue protein sequence, read N- to C-terminus: Oncoprotein MEQ (339 aa).

The tract at residues 1–80 (MSQEPEPGAM…ARRRRRKQTD (80 aa)) is disordered. S42 is modified (phosphoserine; by host CDK2). A basic motif region spans residues 57-84 (KQKLERRRKRNRDAARRRRRKQTDYVDK). Positions 57–120 (KQKLERRRKR…TSLRVQLACH (64 aa)) constitute a bZIP domain. Over residues 60-77 (LERRRKRNRDAARRRRRK) the composition is skewed to basic residues. The Nuclear localization signal signature appears at 62-78 (RRRKRNRDAARRRRRKQ). The tract at residues 85–113 (LHEACEELQRANEHLRKEIRDLRTECTSL) is leucine-zipper. A transactivation domain region spans residues 120 to 339 (HEPVCPMAVP…VWWFPGDGRP (220 aa)). Positions 145 to 160 (PEPPICTPPPPSPDEP) are enriched in pro residues. Positions 145-172 (PEPPICTPPPPSPDEPNAPHCSGSQPPI) are disordered.

It belongs to the bZIP family. Jun subfamily. In terms of assembly, homodimer. Interacts with host JUN; this interaction allows MEQ to engage in host cell processes by disguising itself as a cellular JUN. Phosphorylated by host CDK2; this phosphorylation greatly reduces the DNA binding activity of MEQ.

The protein localises to the host nucleus. Its subcellular location is the host nucleolus. Functionally, functions as a DNA-binding transcription factor. Promotes transformation, host cell growth, host cell-cycle progression through G1/S phase, and possesses antiapoptotic activity. Forms functional heterodimers with host JUN. These heterodimers bind with high affinity DNA sequences called MEQ-responsive elements MERE I (TGACA/GTCA), while MEQ homodimers bind a second type of sites termed MERE II (ACACA). Both homo and heterodimerization of MEQ are required for oncogenesis. The sequence is that of Oncoprotein MEQ (MDV005) from Gallid herpesvirus 2 (strain Chicken/Md5/ATCC VR-987) (GaHV-2).